The following is a 105-amino-acid chain: Large ribosomal subunit protein bL21 (105 aa).

This sequence belongs to the bacterial ribosomal protein bL21 family. Part of the 50S ribosomal subunit. Contacts protein L20.

Functionally, this protein binds to 23S rRNA in the presence of protein L20. The chain is Large ribosomal subunit protein bL21 from Desulfatibacillum aliphaticivorans.